We begin with the raw amino-acid sequence, 449 residues long: MREIIHLSTGQCGNQIGAAFWETICGEHGLDNNGTYVGNNELQKSKLDVYFNEATSGKYVPRAVLVDLEPGTIDNVKTSQIGNLFRPDNFIFGQSSAGNVWAKGHYTEGAELVDSVLDVVRREAEGCDSLQGFQITHSLGGGTGSGMGTLLISKIREEFPDTMMATFSVVPSPKVSDTVIEPYNATLSVHQLVENSDETFCIDNEALYNICQNTLKLPQPSYAELNNLVSSVMSGVTTSLRYPGQLNSDLRKLAVNLVPFPRLHFFMVGYAPLTSMGSKSFRSVTVPELTQQMFDAKNMMAASDPRNGRYLTVAAFFRGKVSVKEVDDEMHKIQTRNSSYFVDWIPNNVQTAVCSVPPKDLDMSATFIGNSTSIQELFKRVGDQFSAMFRRKAFLHWYTSEGMDEMEFTEAESNMNDLVSEYQQYQEASIDEEELEYADEIPLEDAAME.

The GTP site is built by glutamine 11, glutamate 69, serine 138, glycine 142, threonine 143, glycine 144, asparagine 204, and asparagine 226. Glutamate 69 contacts Mg(2+).

This sequence belongs to the tubulin family. As to quaternary structure, dimer of alpha and beta chains. A typical microtubule is a hollow water-filled tube with an outer diameter of 25 nm and an inner diameter of 15 nM. Alpha-beta heterodimers associate head-to-tail to form protofilaments running lengthwise along the microtubule wall with the beta-tubulin subunit facing the microtubule plus end conferring a structural polarity. Microtubules usually have 13 protofilaments but different protofilament numbers can be found in some organisms and specialized cells. Mg(2+) is required as a cofactor.

The protein localises to the cytoplasm. Its subcellular location is the cytoskeleton. Functionally, tubulin is the major constituent of microtubules, a cylinder consisting of laterally associated linear protofilaments composed of alpha- and beta-tubulin heterodimers. Microtubules grow by the addition of GTP-tubulin dimers to the microtubule end, where a stabilizing cap forms. Below the cap, tubulin dimers are in GDP-bound state, owing to GTPase activity of alpha-tubulin. In Candida albicans (Yeast), this protein is Tubulin beta chain (TUB2).